Here is a 105-residue protein sequence, read N- to C-terminus: Large ribosomal subunit protein uL18c (105 aa).

This sequence belongs to the universal ribosomal protein uL18 family. Part of the 50S ribosomal subunit; contacts the 5S rRNA.

The protein resides in the plastid. Its subcellular location is the chloroplast. Functionally, binds 5S rRNA, forms part of the central protuberance of the 50S subunit. This is Large ribosomal subunit protein uL18c (rpl18) from Cyanidium caldarium (Red alga).